We begin with the raw amino-acid sequence, 177 residues long: Probable inosine/xanthosine triphosphatase (177 aa).

The protein belongs to the YjjX NTPase family. As to quaternary structure, homodimer. Requires Mg(2+) as cofactor. Mn(2+) serves as cofactor.

The enzyme catalyses XTP + H2O = XDP + phosphate + H(+). The catalysed reaction is ITP + H2O = IDP + phosphate + H(+). Phosphatase that hydrolyzes non-canonical purine nucleotides such as XTP and ITP to their respective diphosphate derivatives. Probably excludes non-canonical purines from DNA/RNA precursor pool, thus preventing their incorporation into DNA/RNA and avoiding chromosomal lesions. The chain is Probable inosine/xanthosine triphosphatase from Pyrobaculum islandicum (strain DSM 4184 / JCM 9189 / GEO3).